The sequence spans 823 residues: DNA topoisomerase 4 subunit A (823 aa).

Residues 30–496 (LPDIRDGLKP…KAIEIDTASL (467 aa)) enclose the Topo IIA-type catalytic domain. Tyrosine 118 (O-(5'-phospho-DNA)-tyrosine intermediate) is an active-site residue.

This sequence belongs to the type II topoisomerase GyrA/ParC subunit family. ParC type 2 subfamily. In terms of assembly, heterotetramer composed of ParC and ParE.

The protein resides in the cell membrane. The catalysed reaction is ATP-dependent breakage, passage and rejoining of double-stranded DNA.. Inhibited by quinolones, such as levofloxacin. Its function is as follows. Topoisomerase IV is essential for chromosome segregation. It relaxes supercoiled DNA. Performs the decatenation events required during the replication of a circular DNA molecule. The protein is DNA topoisomerase 4 subunit A of Streptococcus pneumoniae serotype 4 (strain ATCC BAA-334 / TIGR4).